The sequence spans 276 residues: Odontogenic ameloblast-associated protein (276 aa).

Residues 1-15 (MRTLILLGILGATMS) form the signal peptide. O-linked (GalNAc...) threonine glycosylation is found at Thr101, Thr113, and Thr117. Residues 125-127 (MPS) are interaction with ARHGEF5. Residue Ser246 is glycosylated (O-linked (GalNAc...) serine). Thr247, Thr248, and Thr252 each carry an O-linked (GalNAc...) threonine glycan. O-linked (GalNAc...) serine glycosylation is present at Ser253. Residues Thr254, Thr258, Thr260, and Thr270 are each glycosylated (O-linked (GalNAc...) threonine). Residue Ser272 is glycosylated (O-linked (GalNAc...) serine).

This sequence belongs to the ODAM family. As to quaternary structure, interacts (via C-terminus) with ARHGEF5. In terms of processing, O-glycosylated.

It is found in the secreted. The protein resides in the cytoplasm. Its subcellular location is the nucleus. In terms of biological role, tooth-associated epithelia protein that probably plays a role in odontogenesis, the complex process that results in the initiation and generation of the tooth. May be incorporated in the enamel matrix at the end of mineralization process. Involved in the induction of RHOA activity via interaction with ARHGEF and expression of downstream factors such as ROCK. Plays a role in attachment of the junctional epithelium to the tooth surface. This is Odontogenic ameloblast-associated protein (ODAM) from Sus scrofa (Pig).